The primary structure comprises 122 residues: NADH-quinone oxidoreductase subunit A (122 aa).

3 helical membrane-spanning segments follow: residues 10–30, 67–87, and 91–111; these read LIIF…LTAG, FALL…WAVV, and LGLF…IGLI.

This sequence belongs to the complex I subunit 3 family. As to quaternary structure, NDH-1 is composed of 14 different subunits. Subunits NuoA, H, J, K, L, M, N constitute the membrane sector of the complex.

The protein localises to the cell membrane. It carries out the reaction a quinone + NADH + 5 H(+)(in) = a quinol + NAD(+) + 4 H(+)(out). Its function is as follows. NDH-1 shuttles electrons from NADH, via FMN and iron-sulfur (Fe-S) centers, to quinones in the respiratory chain. The immediate electron acceptor for the enzyme in this species is believed to be a menaquinone. Couples the redox reaction to proton translocation (for every two electrons transferred, four hydrogen ions are translocated across the cytoplasmic membrane), and thus conserves the redox energy in a proton gradient. The polypeptide is NADH-quinone oxidoreductase subunit A (Geobacillus kaustophilus (strain HTA426)).